Reading from the N-terminus, the 434-residue chain is Gamma-glutamyl phosphate reductase (434 aa).

Residues 1 to 11 show a composition bias toward polar residues; that stretch reads MTNSNEAQENA. Residues 1-26 are disordered; it reads MTNSNEAQENALSPERQAERDEVLAK. Over residues 16–25 the composition is skewed to basic and acidic residues; the sequence is RQAERDEVLA.

Belongs to the gamma-glutamyl phosphate reductase family.

The protein localises to the cytoplasm. It carries out the reaction L-glutamate 5-semialdehyde + phosphate + NADP(+) = L-glutamyl 5-phosphate + NADPH + H(+). It functions in the pathway amino-acid biosynthesis; L-proline biosynthesis; L-glutamate 5-semialdehyde from L-glutamate: step 2/2. Its function is as follows. Catalyzes the NADPH-dependent reduction of L-glutamate 5-phosphate into L-glutamate 5-semialdehyde and phosphate. The product spontaneously undergoes cyclization to form 1-pyrroline-5-carboxylate. In Corynebacterium jeikeium (strain K411), this protein is Gamma-glutamyl phosphate reductase.